The sequence spans 127 residues: Large ribosomal subunit protein bL17 (127 aa).

This sequence belongs to the bacterial ribosomal protein bL17 family. Part of the 50S ribosomal subunit. Contacts protein L32.

This Actinobacillus pleuropneumoniae serotype 7 (strain AP76) protein is Large ribosomal subunit protein bL17.